Here is a 168-residue protein sequence, read N- to C-terminus: Protein A40 (168 aa).

The Cytoplasmic portion of the chain corresponds to 1–9; that stretch reads MNKPKTDYA. Residues 10–30 traverse the membrane as a helical; Signal-anchor for type II membrane protein segment; it reads GYACCVICGLIVGIIFTATLL. Residues 31–168 lie on the Extracellular side of the membrane; sequence KVVERKLVHT…TTFLSYHYFG (138 aa). A C-type lectin domain is found at 63–168; that stretch reads YNNKCIHLST…TTFLSYHYFG (106 aa).

It belongs to the poxviridae A40 protein family.

The protein resides in the host membrane. The sequence is that of Protein A40 from Homo sapiens (Human).